The sequence spans 414 residues: Isocitrate dehydrogenase [NADP] cytoplasmic (414 aa).

Ser-2 carries the N-acetylserine modification. A Phosphotyrosine modification is found at Tyr-42. 75–77 (TIT) lines the NADP(+) pocket. Thr-77 is a binding site for substrate. Lys-81 carries the N6-acetyllysine modification. Arg-82 is a binding site for NADP(+). Substrate-binding positions include 94-100 (SPNGTIR) and Arg-109. Lys-126 is subject to N6-succinyllysine. Residues Arg-132 and Lys-212 each contribute to the substrate site. 3 positions are modified to N6-acetyllysine: Lys-224, Lys-233, and Lys-243. Asp-252 is a binding site for Mn(2+). Lys-260 is a binding site for NADP(+). Mn(2+) is bound by residues Asp-275 and Asp-279. 310 to 315 (GTVTRH) contributes to the NADP(+) binding site. Lys-321 carries the post-translational modification N6-acetyllysine. NADP(+) is bound at residue Asn-328. At Ser-389 the chain carries Phosphoserine. The residue at position 400 (Lys-400) is an N6-succinyllysine.

The protein belongs to the isocitrate and isopropylmalate dehydrogenases family. As to quaternary structure, homodimer. Mg(2+) serves as cofactor. Mn(2+) is required as a cofactor. Post-translationally, the N-terminus is blocked. Acetylation at Lys-374 dramatically reduces catalytic activity. In terms of tissue distribution, ubiquitous.

Its subcellular location is the cytoplasm. It localises to the cytosol. The protein localises to the peroxisome. It carries out the reaction D-threo-isocitrate + NADP(+) = 2-oxoglutarate + CO2 + NADPH. Functionally, catalyzes the NADP(+)-dependent oxidative decarboxylation of isocitrate (D-threo-isocitrate) to 2-ketoglutarate (2-oxoglutarate), which is required by other enzymes such as the phytanoyl-CoA dioxygenase. Plays a critical role in the generation of NADPH, an important cofactor in many biosynthesis pathways. May act as a corneal epithelial crystallin and may be involved in maintaining corneal epithelial transparency. This Rattus norvegicus (Rat) protein is Isocitrate dehydrogenase [NADP] cytoplasmic (Idh1).